Reading from the N-terminus, the 34-residue chain is Photosystem II reaction center protein M (34 aa).

A helical membrane pass occupies residues isoleucine 5–isoleucine 25.

Belongs to the PsbM family. In terms of assembly, PSII is composed of 1 copy each of membrane proteins PsbA, PsbB, PsbC, PsbD, PsbE, PsbF, PsbH, PsbI, PsbJ, PsbK, PsbL, PsbM, PsbT, PsbX, PsbY, PsbZ, Psb30/Ycf12, at least 3 peripheral proteins of the oxygen-evolving complex and a large number of cofactors. It forms dimeric complexes.

The protein localises to the plastid. The protein resides in the chloroplast thylakoid membrane. Its function is as follows. One of the components of the core complex of photosystem II (PSII). PSII is a light-driven water:plastoquinone oxidoreductase that uses light energy to abstract electrons from H(2)O, generating O(2) and a proton gradient subsequently used for ATP formation. It consists of a core antenna complex that captures photons, and an electron transfer chain that converts photonic excitation into a charge separation. This subunit is found at the monomer-monomer interface. This chain is Photosystem II reaction center protein M, found in Agrostis stolonifera (Creeping bentgrass).